Here is a 195-residue protein sequence, read N- to C-terminus: Pyruvoyl-dependent arginine decarboxylase AaxB (195 aa).

The residue at position 53 (serine 53) is a Pyruvic acid (Ser).

The protein belongs to the pyruvoyl-dependent arginine decarboxylase family. As to quaternary structure, trimer of an alpha-beta dimer. Requires pyruvate as cofactor.

The protein localises to the cytoplasm. It catalyses the reaction L-arginine + H(+) = agmatine + CO2. In terms of biological role, part of the AaxABC system, catalyzes the decarboxylation of L-arginine. The arginine uptake by the bacterium in the macrophage may be a virulence factor against the host innate immune response. The sequence is that of Pyruvoyl-dependent arginine decarboxylase AaxB (aaxB) from Chlamydia trachomatis serovar L2 (strain ATCC VR-902B / DSM 19102 / 434/Bu).